Consider the following 355-residue polypeptide: CX3C chemokine receptor 1 (355 aa).

At 1–31 (MDQFPESVTENFEYDDLAEACYIGDIVVFGT) the chain is on the extracellular side. A helical membrane pass occupies residues 32 to 59 (VFLSIFYSVIFAIGLVGNLLVVFALTNS). Residues 60 to 69 (KKPKSVTDIY) lie on the Cytoplasmic side of the membrane. The chain crosses the membrane as a helical span at residues 70–90 (LLNLALSDLLFVATLPFWTHY). The Extracellular portion of the chain corresponds to 91–103 (LINEKGLHNAMCK). Cysteine 102 and cysteine 175 are oxidised to a cystine. A helical transmembrane segment spans residues 104-125 (FTTAFFFIGFFGSIFFITVISI). Over 126–142 (DRYLAIVLAANSMNNRT) the chain is Cytoplasmic. A helical membrane pass occupies residues 143–167 (VQHGVTISLGVWAAAILVAAPQFMF). The Extracellular portion of the chain corresponds to 168–195 (TKQKENECLGDYPEVLQEIWPVLRNVET). A helical membrane pass occupies residues 196–215 (NFLGFLLPLLIMSYCYFRII). Residues 216–231 (QTLFSCKNHKKAKAIK) are Cytoplasmic-facing. The chain crosses the membrane as a helical span at residues 232–256 (LILLVVIVFFLFWTPYNVMIFLETL). Residues 257 to 273 (KLYDFFPSCDMRKDLRL) are Extracellular-facing. A helical membrane pass occupies residues 274–297 (ALSVTETVAFSHCCLNPLIYAFAG). Over 298–355 (EKFRRYLYHLYGKCLAVLCGRSVHVDFSSSESQRSRHGSVLSSNFTYHTSDGDALLLL) the chain is Cytoplasmic. Position 346 is a phosphothreonine (threonine 346).

It belongs to the G-protein coupled receptor 1 family. In terms of assembly, found in a ternary complex with CX3CL1 and ITGAV:ITGB3 or ITGA4:ITGB1. As to quaternary structure, (Microbial infection) Interacts with human respiratory syncytial virus (HRSV) protein G; this interaction modulates host immune response. (Microbial infection) Interacts with HIV-1 envelope polyprotein gp160. Post-translationally, this protein is not N-glycosylated which is unusual for G-protein-coupled receptors. In terms of tissue distribution, expressed in lymphoid and neural tissues. Expressed in lymphocyte subsets, such as natural killer (NK) cells, gamma-delta T-cells and terminally differentiated CD8(+) T-cells. Expressed in smooth muscle cells in atherosclerotic plaques.

It is found in the cell membrane. In terms of biological role, receptor for the C-X3-C chemokine fractalkine (CX3CL1) present on many early leukocyte cells; CX3CR1-CX3CL1 signaling exerts distinct functions in different tissue compartments, such as immune response, inflammation, cell adhesion and chemotaxis. CX3CR1-CX3CL1 signaling mediates cell migratory functions. Responsible for the recruitment of natural killer (NK) cells to inflamed tissues. Acts as a regulator of inflammation process leading to atherogenesis by mediating macrophage and monocyte recruitment to inflamed atherosclerotic plaques, promoting cell survival. Involved in airway inflammation by promoting interleukin 2-producing T helper (Th2) cell survival in inflamed lung. Involved in the migration of circulating monocytes to non-inflamed tissues, where they differentiate into macrophages and dendritic cells. Acts as a negative regulator of angiogenesis, probably by promoting macrophage chemotaxis. Plays a key role in brain microglia by regulating inflammatory response in the central nervous system (CNS) and regulating synapse maturation. Required to restrain the microglial inflammatory response in the CNS and the resulting parenchymal damage in response to pathological stimuli. Involved in brain development by participating in synaptic pruning, a natural process during which brain microglia eliminates extra synapses during postnatal development. Synaptic pruning by microglia is required to promote the maturation of circuit connectivity during brain development. Acts as an important regulator of the gut microbiota by controlling immunity to intestinal bacteria and fungi. Expressed in lamina propria dendritic cells in the small intestine, which form transepithelial dendrites capable of taking up bacteria in order to provide defense against pathogenic bacteria. Required to initiate innate and adaptive immune responses against dissemination of commensal fungi (mycobiota) component of the gut: expressed in mononuclear phagocytes (MNPs) and acts by promoting induction of antifungal IgG antibodies response to confer protection against disseminated C.albicans or C.auris infection. Also acts as a receptor for C-C motif chemokine CCL26, inducing cell chemotaxis. (Microbial infection) Acts as a coreceptor with CD4 for HIV-1 virus envelope protein. Its function is as follows. (Microbial infection) Acts as a coreceptor with CD4 for HIV-1 virus envelope protein. May have more potent HIV-1 coreceptothr activity than isoform 1. Functionally, (Microbial infection) Acts as a coreceptor with CD4 for HIV-1 virus envelope protein. May have more potent HIV-1 coreceptor activity than isoform 1. The sequence is that of CX3C chemokine receptor 1 from Homo sapiens (Human).